Here is a 226-residue protein sequence, read N- to C-terminus: Probable endonuclease LCL3 (226 aa).

A helical membrane pass occupies residues 15–32 (VFYTSILTGGILSSFYVY). The 160-residue stretch at 53–212 (RTLFGRVTSV…RKKKIGMFQQ (160 aa)) folds into the TNase-like domain. Arginine 103 is a catalytic residue. Aspartate 108 is a Ca(2+) binding site. Active-site residues include glutamate 111 and arginine 151.

This sequence belongs to the LCL3 family.

Its subcellular location is the mitochondrion. It localises to the membrane. This Yarrowia lipolytica (strain CLIB 122 / E 150) (Yeast) protein is Probable endonuclease LCL3 (LCL3).